Consider the following 74-residue polypeptide: Conotoxin Bu4 (74 aa).

The signal sequence occupies residues 1–22; the sequence is MKLTCVVIVAVLLLTACQLIIA. A propeptide spanning residues 23–45 is cleaved from the precursor; that stretch reads EDSRGTQLHRALRKATKLSVSTR. Disulfide bonds link C47–C63, C54–C66, and C62–C73.

It belongs to the conotoxin O1 superfamily. In terms of tissue distribution, expressed by the venom duct.

The protein resides in the secreted. In Conus bullatus (Bubble cone), this protein is Conotoxin Bu4.